Consider the following 166-residue polypeptide: NADH-quinone oxidoreductase subunit C (166 aa).

The protein belongs to the complex I 30 kDa subunit family. NDH-1 is composed of 14 different subunits. Subunits NuoB, C, D, E, F, and G constitute the peripheral sector of the complex.

It localises to the cell inner membrane. The enzyme catalyses a quinone + NADH + 5 H(+)(in) = a quinol + NAD(+) + 4 H(+)(out). NDH-1 shuttles electrons from NADH, via FMN and iron-sulfur (Fe-S) centers, to quinones in the respiratory chain. The immediate electron acceptor for the enzyme in this species is believed to be a menaquinone. Couples the redox reaction to proton translocation (for every two electrons transferred, four hydrogen ions are translocated across the cytoplasmic membrane), and thus conserves the redox energy in a proton gradient. This chain is NADH-quinone oxidoreductase subunit C, found in Chlorobium phaeobacteroides (strain DSM 266 / SMG 266 / 2430).